Reading from the N-terminus, the 261-residue chain is Glucose 1-dehydrogenase 4 (261 aa).

11-35 is an NAD(+) binding site; that stretch reads VITGGSTGLGRAMAVRFGQEEAKVV. Ser145 contacts substrate. The active-site Proton acceptor is the Tyr158.

Belongs to the short-chain dehydrogenases/reductases (SDR) family. As to quaternary structure, homotetramer.

The enzyme catalyses D-glucose + NAD(+) = D-glucono-1,5-lactone + NADH + H(+). The catalysed reaction is D-glucose + NADP(+) = D-glucono-1,5-lactone + NADPH + H(+). The sequence is that of Glucose 1-dehydrogenase 4 (gdhIV) from Priestia megaterium (Bacillus megaterium).